The primary structure comprises 248 residues: NH(3)-dependent NAD(+) synthetase (248 aa).

30-37 (GLSGGIDS) serves as a coordination point for ATP. Asp-36 is a Mg(2+) binding site. Arg-114 serves as a coordination point for deamido-NAD(+). An ATP-binding site is contributed by Thr-134. Mg(2+) is bound at residue Glu-139. Deamido-NAD(+)-binding residues include Lys-147 and Asp-154. 2 residues coordinate ATP: Lys-163 and Thr-185. Residue 232–233 (HK) participates in deamido-NAD(+) binding.

The protein belongs to the NAD synthetase family. In terms of assembly, homodimer.

The catalysed reaction is deamido-NAD(+) + NH4(+) + ATP = AMP + diphosphate + NAD(+) + H(+). Its pathway is cofactor biosynthesis; NAD(+) biosynthesis; NAD(+) from deamido-NAD(+) (ammonia route): step 1/1. In terms of biological role, catalyzes the ATP-dependent amidation of deamido-NAD to form NAD. Uses ammonia as a nitrogen source. The chain is NH(3)-dependent NAD(+) synthetase from Mycoplasma genitalium (strain ATCC 33530 / DSM 19775 / NCTC 10195 / G37) (Mycoplasmoides genitalium).